The chain runs to 129 residues: Small ribosomal subunit protein uS11 (129 aa).

This sequence belongs to the universal ribosomal protein uS11 family. In terms of assembly, part of the 30S ribosomal subunit. Interacts with proteins S7 and S18. Binds to IF-3.

Functionally, located on the platform of the 30S subunit, it bridges several disparate RNA helices of the 16S rRNA. Forms part of the Shine-Dalgarno cleft in the 70S ribosome. The sequence is that of Small ribosomal subunit protein uS11 from Vibrio atlanticus (strain LGP32) (Vibrio splendidus (strain Mel32)).